The primary structure comprises 426 residues: Probable histidine--tRNA ligase (426 aa).

It belongs to the class-II aminoacyl-tRNA synthetase family. As to quaternary structure, homodimer.

It localises to the cytoplasm. It catalyses the reaction tRNA(His) + L-histidine + ATP = L-histidyl-tRNA(His) + AMP + diphosphate + H(+). This Tropheryma whipplei (strain TW08/27) (Whipple's bacillus) protein is Probable histidine--tRNA ligase (hisS).